Reading from the N-terminus, the 427-residue chain is Glutamate-1-semialdehyde 2,1-aminomutase (427 aa).

N6-(pyridoxal phosphate)lysine is present on Lys265.

It belongs to the class-III pyridoxal-phosphate-dependent aminotransferase family. HemL subfamily. In terms of assembly, homodimer. It depends on pyridoxal 5'-phosphate as a cofactor.

Its subcellular location is the cytoplasm. The catalysed reaction is (S)-4-amino-5-oxopentanoate = 5-aminolevulinate. Its pathway is porphyrin-containing compound metabolism; protoporphyrin-IX biosynthesis; 5-aminolevulinate from L-glutamyl-tRNA(Glu): step 2/2. The sequence is that of Glutamate-1-semialdehyde 2,1-aminomutase from Nitratiruptor sp. (strain SB155-2).